A 370-amino-acid polypeptide reads, in one-letter code: Small ribosomal subunit biogenesis GTPase RsgA 1 (370 aa).

Residues 97 to 255 (QTQLDRPPIA…LADTPGFNQP (159 aa)) enclose the CP-type G domain. GTP-binding positions include 146 to 149 (NKSD) and 197 to 205 (GPSGVGKSS). Positions 280, 285, 287, and 293 each coordinate Zn(2+). The tract at residues 325-370 (PESTLKLKTKGKGQSQYEPKLESKKYRRTSRRTQVQGLQDLYQEEE) is disordered.

The protein belongs to the TRAFAC class YlqF/YawG GTPase family. RsgA subfamily. In terms of assembly, monomer. Associates with 30S ribosomal subunit, binds 16S rRNA. Zn(2+) is required as a cofactor.

It is found in the cytoplasm. In terms of biological role, one of several proteins that assist in the late maturation steps of the functional core of the 30S ribosomal subunit. Helps release RbfA from mature subunits. May play a role in the assembly of ribosomal proteins into the subunit. Circularly permuted GTPase that catalyzes slow GTP hydrolysis, GTPase activity is stimulated by the 30S ribosomal subunit. This is Small ribosomal subunit biogenesis GTPase RsgA 1 from Nostoc sp. (strain PCC 7120 / SAG 25.82 / UTEX 2576).